The sequence spans 100 residues: Integration host factor subunit alpha (100 aa).

The tract at residues D54–P73 is disordered.

It belongs to the bacterial histone-like protein family. In terms of assembly, heterodimer of an alpha and a beta chain.

In terms of biological role, this protein is one of the two subunits of integration host factor, a specific DNA-binding protein that functions in genetic recombination as well as in transcriptional and translational control. This is Integration host factor subunit alpha from Pseudomonas aeruginosa (strain UCBPP-PA14).